The chain runs to 273 residues: Beta-lactamase OXA-23 (273 aa).

A signal peptide spans 1–17 (MNKYFTCYVVASLFLSG). Ser79 serves as the catalytic Acyl-ester intermediate. A beta-lactam contacts are provided by Ser79, Lys82, Ser126, Thr217, Trp219, and Arg259. Position 82 is an N6-carboxylysine (Lys82).

It belongs to the class-D beta-lactamase family. Monomer. Carboxylated on the epsilon-amino group of a lysine, with the resulting carbamate functional group serving as a general base. Probably N-carboxylated at Lys-82 at neutral pH in vivo and undergoes complete N-decarboxylation, at pH 4.1, in vitro.

The protein resides in the periplasm. It carries out the reaction a beta-lactam + H2O = a substituted beta-amino acid. Its activity is regulated as follows. Inhibited by the desmethyl carbapenem, MA-1-206, via a covalent binding to Ser-79. Its function is as follows. Class D beta-lactamase which confers resistance to the beta-lactam antibiotics, including ampicillin, and carbapenems such as imipenem and meropenem. Acts via hydrolysis of the beta-lactam ring. Has penicillin-, cephalosporin- and carbapenem-hydrolyzing activities, but lacks ceftazidime-hydrolyzing activity. This chain is Beta-lactamase OXA-23, found in Acinetobacter baumannii.